A 435-amino-acid chain; its full sequence is Probable xyloglucan galactosyltransferase GT19 (435 aa).

The Cytoplasmic segment spans residues 1–6; it reads MASKST. The helical; Signal-anchor for type II membrane protein transmembrane segment at 7 to 23 threads the bilayer; sequence VTTLTIFFFFFFFFIEP. Residues 24–435 are Lumenal-facing; that stretch reads KVQSQQISAV…GVLDRIISRV (412 aa). N-linked (GlcNAc...) asparagine glycans are attached at residues asparagine 140, asparagine 203, and asparagine 277.

Belongs to the glycosyltransferase 47 family. In terms of tissue distribution, expressed in roots, hypocotyls, cotyledons, leaves, stems, stamens and pollen grains.

It localises to the golgi apparatus membrane. In terms of biological role, functions in xyloglucan synthesis by adding side chains to the xylosylated glucan backbone. Involved in the galactosylation of hemicellulose xyloglucan. The polypeptide is Probable xyloglucan galactosyltransferase GT19 (Arabidopsis thaliana (Mouse-ear cress)).